Consider the following 318-residue polypeptide: Pantothenate kinase (318 aa).

96–103 serves as a coordination point for ATP; the sequence is GSVSVGKS.

Belongs to the prokaryotic pantothenate kinase family.

The protein resides in the cytoplasm. It catalyses the reaction (R)-pantothenate + ATP = (R)-4'-phosphopantothenate + ADP + H(+). It functions in the pathway cofactor biosynthesis; coenzyme A biosynthesis; CoA from (R)-pantothenate: step 1/5. This chain is Pantothenate kinase, found in Bradyrhizobium sp. (strain ORS 278).